The chain runs to 398 residues: Phosphoglycerate kinase (398 aa).

Substrate-binding positions include 23–25 (DLN), Arg38, 61–64 (HFGR), Arg120, and Arg153. Residues Lys203, Glu325, and 355-358 (GGDT) contribute to the ATP site.

The protein belongs to the phosphoglycerate kinase family. Monomer.

It localises to the cytoplasm. The catalysed reaction is (2R)-3-phosphoglycerate + ATP = (2R)-3-phospho-glyceroyl phosphate + ADP. It participates in carbohydrate degradation; glycolysis; pyruvate from D-glyceraldehyde 3-phosphate: step 2/5. In Sphingopyxis alaskensis (strain DSM 13593 / LMG 18877 / RB2256) (Sphingomonas alaskensis), this protein is Phosphoglycerate kinase.